We begin with the raw amino-acid sequence, 274 residues long: NH(3)-dependent NAD(+) synthetase (274 aa).

46–53 (GISGGQDS) is a binding site for ATP. Asp52 lines the Mg(2+) pocket. Residue Arg140 participates in deamido-NAD(+) binding. An ATP-binding site is contributed by Thr160. Position 165 (Glu165) interacts with Mg(2+). Positions 173 and 180 each coordinate deamido-NAD(+). The ATP site is built by Lys189 and Thr211. Position 260–261 (260–261 (HK)) interacts with deamido-NAD(+).

This sequence belongs to the NAD synthetase family. As to quaternary structure, homodimer.

It carries out the reaction deamido-NAD(+) + NH4(+) + ATP = AMP + diphosphate + NAD(+) + H(+). It participates in cofactor biosynthesis; NAD(+) biosynthesis; NAD(+) from deamido-NAD(+) (ammonia route): step 1/1. Functionally, catalyzes the ATP-dependent amidation of deamido-NAD to form NAD. Uses ammonia as a nitrogen source. This is NH(3)-dependent NAD(+) synthetase from Streptococcus pyogenes serotype M18 (strain MGAS8232).